The chain runs to 37 residues: Cytochrome b6-f complex subunit 5 (37 aa).

A helical membrane pass occupies residues 5–25; that stretch reads LLCGIVLGLIPITLAGLFVAA.

The protein belongs to the PetG family. The 4 large subunits of the cytochrome b6-f complex are cytochrome b6, subunit IV (17 kDa polypeptide, PetD), cytochrome f and the Rieske protein, while the 4 small subunits are PetG, PetL, PetM and PetN. The complex functions as a dimer.

The protein localises to the cellular thylakoid membrane. In terms of biological role, component of the cytochrome b6-f complex, which mediates electron transfer between photosystem II (PSII) and photosystem I (PSI), cyclic electron flow around PSI, and state transitions. PetG is required for either the stability or assembly of the cytochrome b6-f complex. This is Cytochrome b6-f complex subunit 5 from Cyanothece sp. (strain PCC 7425 / ATCC 29141).